The primary structure comprises 335 residues: N-lysine methyltransferase KMT5A-A (335 aa).

Disordered regions lie at residues 1 to 91 (MGRG…EVEK) and 133 to 183 (LPPE…EIES). Positions 67–91 (SVTHHESKCLGKPSTETRKKAEVEK) are enriched in basic and acidic residues. Residues 145–161 (VKNKPLRKKTQRQKSPN) show a composition bias toward basic residues. Positions 199–320 (EGIKMHMITG…VGEELLYDYG (122 aa)) constitute an SET domain. Residues 209–211 (KGR), Tyr-254, and 281–282 (NH) each bind S-adenosyl-L-methionine.

Belongs to the class V-like SAM-binding methyltransferase superfamily. Histone-lysine methyltransferase family. PR/SET subfamily.

Its subcellular location is the nucleus. It localises to the chromosome. The catalysed reaction is L-lysyl(20)-[histone H4] + S-adenosyl-L-methionine = N(6)-methyl-L-lysyl(20)-[histone H4] + S-adenosyl-L-homocysteine + H(+). The enzyme catalyses L-lysyl-[protein] + S-adenosyl-L-methionine = N(6)-methyl-L-lysyl-[protein] + S-adenosyl-L-homocysteine + H(+). In terms of biological role, protein-lysine N-methyltransferase that monomethylates both histones and non-histone proteins. Specifically monomethylates 'Lys-20' of histone H4 (H4K20me1). H4K20me1 is enriched during mitosis and represents a specific tag for epigenetic transcriptional repression. Mainly functions in euchromatin regions, thereby playing a central role in the silencing of euchromatic genes. Required for cell proliferation, probably by contributing to the maintenance of proper higher-order structure of DNA during mitosis. Involved in chromosome condensation and proper cytokinesis. The chain is N-lysine methyltransferase KMT5A-A from Xenopus laevis (African clawed frog).